Reading from the N-terminus, the 215-residue chain is Abscisic acid receptor PYL6 (215 aa).

The tract at residues 54 to 209 (HVVGPSQCFS…NLQSLAKLAE (156 aa)) is START-like. Cysteines 61 and 190 form a disulfide. Abscisate is bound by residues Lys90, 120–125 (AAFSLE), 147–153 (RLMNYKS), and Glu174. A Gate loop motif is present at residues 116 to 120 (SGLPA). The short motif at 146-148 (HRL) is the Latch loop element.

The protein belongs to the PYR/PYL/RCAR abscisic acid intracellular receptor family. In terms of assembly, monomer. Homodimer. Binds ABA on one subunit only. Interacts with HAB1, ABI1 and ABI2, and possibly with other PP2Cs. Binds to CARs protein in an ABA-independent manner, both at the plasma membrane and in the nucleus. Interacts directly with CAR1 and CAR4. Interacts with MYC2 in the nucleus. Interaction with MYC2 is increased in the presence of abscisic acid.

It localises to the cytoplasm. It is found in the nucleus. Its subcellular location is the cell membrane. In terms of biological role, receptor for abscisic acid (ABA) required for ABA-mediated responses such as stomatal closure and germination inhibition. Inhibits the activity of group-A protein phosphatases type 2C (PP2Cs) in an ABA-independent manner but more efficiently when activated by ABA. Can be activated by both (-)-ABA and (+)-ABA. May link ABA and jasmonate signaling pathways by modifying MYC2 transcriptional activity, and regulation of JAZ6 and JAZ8 gene expression by MYC2. The polypeptide is Abscisic acid receptor PYL6 (PYL6) (Arabidopsis thaliana (Mouse-ear cress)).